We begin with the raw amino-acid sequence, 127 residues long: Probable toxin y4kH (127 aa).

It belongs to the MbcT/ParT/Res family.

Probable toxic component of a type II toxin-antitoxin (TA) system. It is not known which gene encodes its antitoxin. In Sinorhizobium fredii (strain NBRC 101917 / NGR234), this protein is Probable toxin y4kH.